The following is a 185-amino-acid chain: MSTFEDADTEETVTCLQMTIYHPGQLQSGIFKSIRFCSKEKFPSIEVVKFGRNSNMCQYTFQDKQVSRVQFALQPFKQFNSSVLSFEIKNMSKKTSLMVDNQELGYLNKMDLPYKCMLRFGEYQFLLQKEDGESVESFETQFILSPRPLLQENNWPTQSPIPEDGVYSSYFTHRSSPAEMDENEL.

A Phosphothreonine modification is found at Thr9. The FHA domain occupies 48 to 104; it reads VKFGRNSNMCQYTFQDKQVSRVQFALQPFKQFNSSVLSFEIKNMSKKTSLMVDNQEL.

This sequence belongs to the TIFA family. In terms of assembly, homooligomer; homooligomerizes following phosphorylation at Thr-9. Interacts with IRAK1, TRAF2 and TRAF6. Interacts with TIFAB; binding to TIFAB inhibits TRAF6 activation, possibly by inducing a conformational change in TIFA. Interacts with ZCCHC11; binding to ZCCHC11 suppresses the TRAF6-dependent activation of NF-kappa-B. In terms of processing, phosphorylated at Thr-9 following detection of ADP-D-glycero-beta-D-manno-heptose (ADP-Heptose) by ALPK1. Phosphorylation at Thr-9 by ALPK1 leads to the formation of an intermolecular binding between the FHA domain and phosphorylated Thr-9, promoting TIFA oligomerization and TIFA-mediated NF-kappa-B activation.

The protein resides in the cytoplasm. Its function is as follows. Adapter molecule that plays a key role in the activation of pro-inflammatory NF-kappa-B signaling following detection of bacterial pathogen-associated molecular pattern metabolites (PAMPs). Promotes activation of an innate immune response by inducing the oligomerization and polyubiquitination of TRAF6, which leads to the activation of TAK1 and IKK through a proteasome-independent mechanism. TIFA-dependent innate immune response is triggered by ADP-D-glycero-beta-D-manno-heptose (ADP-Heptose), a potent PAMP present in all Gram-negative and some Gram-positive bacteria: ADP-Heptose is recognized by ALPK1, which phosphorylates TIFA at Thr-9, leading to TIFA homooligomerization and subsequent activation of pro-inflammatory NF-kappa-B signaling. The sequence is that of TRAF-interacting protein with FHA domain-containing protein A from Rattus norvegicus (Rat).